Here is a 517-residue protein sequence, read N- to C-terminus: Bifunctional purine biosynthesis protein PurH (517 aa).

Positions 1–145 (MSPLALVSVS…KNHADVAVLV (145 aa)) constitute an MGS-like domain.

It belongs to the PurH family.

It carries out the reaction (6R)-10-formyltetrahydrofolate + 5-amino-1-(5-phospho-beta-D-ribosyl)imidazole-4-carboxamide = 5-formamido-1-(5-phospho-D-ribosyl)imidazole-4-carboxamide + (6S)-5,6,7,8-tetrahydrofolate. The enzyme catalyses IMP + H2O = 5-formamido-1-(5-phospho-D-ribosyl)imidazole-4-carboxamide. It participates in purine metabolism; IMP biosynthesis via de novo pathway; 5-formamido-1-(5-phospho-D-ribosyl)imidazole-4-carboxamide from 5-amino-1-(5-phospho-D-ribosyl)imidazole-4-carboxamide (10-formyl THF route): step 1/1. It functions in the pathway purine metabolism; IMP biosynthesis via de novo pathway; IMP from 5-formamido-1-(5-phospho-D-ribosyl)imidazole-4-carboxamide: step 1/1. This Prochlorococcus marinus (strain MIT 9515) protein is Bifunctional purine biosynthesis protein PurH.